The chain runs to 382 residues: F-box protein At3g19470 (382 aa).

Positions 1–44 constitute an F-box domain; sequence MYNLPRDLPEEVLCRIPLTSLRPVRSTCKKWSTLSKCGSFAKKH.

This is F-box protein At3g19470 from Arabidopsis thaliana (Mouse-ear cress).